The primary structure comprises 490 residues: tRNA-guanine(15) transglycosylase (490 aa).

The active-site Nucleophile is aspartate 90. Residues aspartate 125 and alanine 193 each contribute to the substrate site. Zn(2+)-binding residues include cysteine 276, cysteine 278, and cysteine 281.

The protein belongs to the archaeosine tRNA-ribosyltransferase family. The cofactor is Zn(2+).

The enzyme catalyses guanosine(15) in tRNA + 7-cyano-7-deazaguanine = 7-cyano-7-carbaguanosine(15) in tRNA + guanine. It participates in tRNA modification; archaeosine-tRNA biosynthesis. In terms of biological role, exchanges the guanine residue with 7-cyano-7-deazaguanine (preQ0) at position 15 in the dihydrouridine loop (D-loop) of archaeal tRNAs. This chain is tRNA-guanine(15) transglycosylase, found in Methanosarcina acetivorans (strain ATCC 35395 / DSM 2834 / JCM 12185 / C2A).